The following is a 407-amino-acid chain: Phosphopentomutase (407 aa).

Positions 10, 306, 311, 347, 348, and 359 each coordinate Mn(2+).

This sequence belongs to the phosphopentomutase family. Requires Mn(2+) as cofactor.

It localises to the cytoplasm. It carries out the reaction 2-deoxy-alpha-D-ribose 1-phosphate = 2-deoxy-D-ribose 5-phosphate. It catalyses the reaction alpha-D-ribose 1-phosphate = D-ribose 5-phosphate. The protein operates within carbohydrate degradation; 2-deoxy-D-ribose 1-phosphate degradation; D-glyceraldehyde 3-phosphate and acetaldehyde from 2-deoxy-alpha-D-ribose 1-phosphate: step 1/2. Isomerase that catalyzes the conversion of deoxy-ribose 1-phosphate (dRib-1-P) and ribose 1-phosphate (Rib-1-P) to deoxy-ribose 5-phosphate (dRib-5-P) and ribose 5-phosphate (Rib-5-P), respectively. In Salmonella schwarzengrund (strain CVM19633), this protein is Phosphopentomutase.